A 456-amino-acid chain; its full sequence is Bifunctional protein GlmU (456 aa).

Residues 1–229 (MLNNAMSVVI…LSEVEGVNNR (229 aa)) form a pyrophosphorylase region. UDP-N-acetyl-alpha-D-glucosamine contacts are provided by residues 11-14 (LAAG), K25, Q76, 81-82 (GT), 103-105 (YGD), G140, E154, N169, and N227. Residue D105 coordinates Mg(2+). Position 227 (N227) interacts with Mg(2+). Positions 230 to 250 (LQLSRLERVYQSEQAEKLLLA) are linker. Residues 251–456 (GVMLRDPARF…EGWRRPVKKK (206 aa)) form an N-acetyltransferase region. 2 residues coordinate UDP-N-acetyl-alpha-D-glucosamine: R333 and K351. The active-site Proton acceptor is H363. UDP-N-acetyl-alpha-D-glucosamine-binding residues include Y366 and N377. Acetyl-CoA is bound by residues A380, 386–387 (NY), S405, A423, and R440.

In the N-terminal section; belongs to the N-acetylglucosamine-1-phosphate uridyltransferase family. It in the C-terminal section; belongs to the transferase hexapeptide repeat family. In terms of assembly, homotrimer. The cofactor is Mg(2+).

Its subcellular location is the cytoplasm. It catalyses the reaction alpha-D-glucosamine 1-phosphate + acetyl-CoA = N-acetyl-alpha-D-glucosamine 1-phosphate + CoA + H(+). It carries out the reaction N-acetyl-alpha-D-glucosamine 1-phosphate + UTP + H(+) = UDP-N-acetyl-alpha-D-glucosamine + diphosphate. It functions in the pathway nucleotide-sugar biosynthesis; UDP-N-acetyl-alpha-D-glucosamine biosynthesis; N-acetyl-alpha-D-glucosamine 1-phosphate from alpha-D-glucosamine 6-phosphate (route II): step 2/2. It participates in nucleotide-sugar biosynthesis; UDP-N-acetyl-alpha-D-glucosamine biosynthesis; UDP-N-acetyl-alpha-D-glucosamine from N-acetyl-alpha-D-glucosamine 1-phosphate: step 1/1. The protein operates within bacterial outer membrane biogenesis; LPS lipid A biosynthesis. Catalyzes the last two sequential reactions in the de novo biosynthetic pathway for UDP-N-acetylglucosamine (UDP-GlcNAc). The C-terminal domain catalyzes the transfer of acetyl group from acetyl coenzyme A to glucosamine-1-phosphate (GlcN-1-P) to produce N-acetylglucosamine-1-phosphate (GlcNAc-1-P), which is converted into UDP-GlcNAc by the transfer of uridine 5-monophosphate (from uridine 5-triphosphate), a reaction catalyzed by the N-terminal domain. This chain is Bifunctional protein GlmU, found in Escherichia fergusonii (strain ATCC 35469 / DSM 13698 / CCUG 18766 / IAM 14443 / JCM 21226 / LMG 7866 / NBRC 102419 / NCTC 12128 / CDC 0568-73).